We begin with the raw amino-acid sequence, 100 residues long: Urease subunit gamma (100 aa).

This sequence belongs to the urease gamma subunit family. Heterotrimer of UreA (gamma), UreB (beta) and UreC (alpha) subunits. Three heterotrimers associate to form the active enzyme.

The protein localises to the cytoplasm. It carries out the reaction urea + 2 H2O + H(+) = hydrogencarbonate + 2 NH4(+). It functions in the pathway nitrogen metabolism; urea degradation; CO(2) and NH(3) from urea (urease route): step 1/1. The protein is Urease subunit gamma of Yersinia bercovieri.